Reading from the N-terminus, the 98-residue chain is Integration host factor subunit alpha (98 aa).

The interval 52–71 is disordered; it reads FDLRDKNQRPGRNPKTGEDI.

It belongs to the bacterial histone-like protein family. In terms of assembly, heterodimer of an alpha and a beta chain.

In terms of biological role, this protein is one of the two subunits of integration host factor, a specific DNA-binding protein that functions in genetic recombination as well as in transcriptional and translational control. This Photorhabdus laumondii subsp. laumondii (strain DSM 15139 / CIP 105565 / TT01) (Photorhabdus luminescens subsp. laumondii) protein is Integration host factor subunit alpha.